The following is a 198-amino-acid chain: Small ribosomal subunit protein uS4 (198 aa).

An S4 RNA-binding domain is found at 91–151; that stretch reads SRLDNIVYRL…EKSKNLKIVE (61 aa).

The protein belongs to the universal ribosomal protein uS4 family. In terms of assembly, part of the 30S ribosomal subunit. Contacts protein S5. The interaction surface between S4 and S5 is involved in control of translational fidelity.

In terms of biological role, one of the primary rRNA binding proteins, it binds directly to 16S rRNA where it nucleates assembly of the body of the 30S subunit. Functionally, with S5 and S12 plays an important role in translational accuracy. This Phytoplasma australiense protein is Small ribosomal subunit protein uS4.